The sequence spans 298 residues: Glutamyl-Q tRNA(Asp) synthetase (298 aa).

L-glutamate-binding positions include 9-13 and Glu-45; that span reads RFAPS. The 'HIGH' region motif lies at 12–22; that stretch reads PSPTGLLHAGS. Zn(2+) contacts are provided by Cys-101, Cys-103, Tyr-121, and Cys-125. 2 residues coordinate L-glutamate: Tyr-179 and Arg-197. A 'KMSKS' region motif is present at residues 235–239; that stretch reads KLSKQ. Lys-238 is an ATP binding site.

Belongs to the class-I aminoacyl-tRNA synthetase family. GluQ subfamily. The cofactor is Zn(2+).

Its function is as follows. Catalyzes the tRNA-independent activation of glutamate in presence of ATP and the subsequent transfer of glutamate onto a tRNA(Asp). Glutamate is transferred on the 2-amino-5-(4,5-dihydroxy-2-cyclopenten-1-yl) moiety of the queuosine in the wobble position of the QUC anticodon. In Chromobacterium violaceum (strain ATCC 12472 / DSM 30191 / JCM 1249 / CCUG 213 / NBRC 12614 / NCIMB 9131 / NCTC 9757 / MK), this protein is Glutamyl-Q tRNA(Asp) synthetase.